Here is an 808-residue protein sequence, read N- to C-terminus: uncharacterized protein (808 aa).

The region spanning 6–41 is the EF-hand 1 domain; that stretch reads SRSEKVKRIFQQFDGNHDGGLNREEMAALVVAVNPR. 7 TPR repeats span residues 234–267, 269–301, 310–343, 344–377, 378–411, 412–445, and 447–479; these read FDGH…QPTD, RPHF…AESG, PQIY…CPTH, FRAL…KPDY, ADAH…KPGH, VDAL…WPNH, and RAQL…TNRV. The 36-residue stretch at 600–635 folds into the EF-hand 2 domain; that stretch reads AIKAINEKILALLDDSGSGRVDMGMFYAVIAPLCGG. Positions 773-794 form a coiled coil; it reads FKQEEYKFREYESEAEAMKAKC.

This is an uncharacterized protein from Arabidopsis thaliana (Mouse-ear cress).